Consider the following 429-residue polypeptide: Glutamate-1-semialdehyde 2,1-aminomutase (429 aa).

The residue at position 265 (Lys-265) is an N6-(pyridoxal phosphate)lysine.

This sequence belongs to the class-III pyridoxal-phosphate-dependent aminotransferase family. HemL subfamily. In terms of assembly, homodimer. The cofactor is pyridoxal 5'-phosphate.

Its subcellular location is the cytoplasm. It catalyses the reaction (S)-4-amino-5-oxopentanoate = 5-aminolevulinate. It functions in the pathway porphyrin-containing compound metabolism; protoporphyrin-IX biosynthesis; 5-aminolevulinate from L-glutamyl-tRNA(Glu): step 2/2. This is Glutamate-1-semialdehyde 2,1-aminomutase from Legionella pneumophila (strain Corby).